Consider the following 108-residue polypeptide: Nucleoid-associated protein PSPTO_3645 (108 aa).

Polar residues predominate over residues 85–96 (QASQDKTASMTA). The segment at 85–108 (QASQDKTASMTAGMQLPPGMKLPF) is disordered.

This sequence belongs to the YbaB/EbfC family. In terms of assembly, homodimer.

It is found in the cytoplasm. It localises to the nucleoid. Its function is as follows. Binds to DNA and alters its conformation. May be involved in regulation of gene expression, nucleoid organization and DNA protection. This is Nucleoid-associated protein PSPTO_3645 from Pseudomonas syringae pv. tomato (strain ATCC BAA-871 / DC3000).